The following is a 388-amino-acid chain: Gastricsin (388 aa).

Positions 1-16 (MKWLLVALVCLHLLEA) are cleaved as a signal peptide. A propeptide spans 17 to 59 (AVIKVPLRKFKSIRETLKEKGLLKEFLNTHKYDPALKYRFGDF) (activation peptide). A Peptidase A1 domain is found at 73-385 (YFGEISIGTP…DMANNRVGFA (313 aa)). Residue Asp91 is part of the active site. Cystine bridges form between Cys104–Cys109 and Cys267–Cys271. Asp276 is an active-site residue. Residues Cys310 and Cys343 are joined by a disulfide bond.

Belongs to the peptidase A1 family.

The protein resides in the secreted. The enzyme catalyses More restricted specificity than pepsin A, but shows preferential cleavage at Tyr-|-Xaa bonds. High activity on hemoglobin.. In terms of biological role, hydrolyzes a variety of proteins. The protein is Gastricsin (PGC) of Oryctolagus cuniculus (Rabbit).